Here is a 141-residue protein sequence, read N- to C-terminus: Ribosome maturation factor RimP (141 aa).

It belongs to the RimP family.

Its subcellular location is the cytoplasm. Required for maturation of 30S ribosomal subunits. The protein is Ribosome maturation factor RimP of Laribacter hongkongensis (strain HLHK9).